A 360-amino-acid polypeptide reads, in one-letter code: Cyclin-dependent kinase 10 (360 aa).

The 285-residue stretch at 39–323 (FEKLNRIGEG…AGDCLESSYF (285 aa)) folds into the Protein kinase domain. ATP-binding positions include 45-53 (IGEGTYGIV) and Lys-68. The Proton acceptor role is filled by Asp-163. Thr-196 is subject to Phosphothreonine. The disordered stretch occupies residues 334 to 360 (LMPTFPHHRNKRAAPATSEGQSKRCKP).

The protein belongs to the protein kinase superfamily. CMGC Ser/Thr protein kinase family. CDC2/CDKX subfamily. As to quaternary structure, heterodimer with CCNQ, the interaction is required for kinase activity. Interacts with ETS2. Interacts with PRK2.

It localises to the cytoplasm. The protein localises to the cytoskeleton. The protein resides in the cilium basal body. The enzyme catalyses L-seryl-[protein] + ATP = O-phospho-L-seryl-[protein] + ADP + H(+). It catalyses the reaction L-threonyl-[protein] + ATP = O-phospho-L-threonyl-[protein] + ADP + H(+). Its function is as follows. Cyclin-dependent kinase that phosphorylates the transcription factor ETS2 (in vitro) and positively controls its proteasomal degradation (in cells). Involved in the regulation of actin cytoskeleton organization through the phosphorylation of actin dynamics regulators such as PKN2. Is a negative regulator of ciliogenesis through phosphorylation of PKN2 and promotion of RhoA signaling. The chain is Cyclin-dependent kinase 10 (CDK10) from Homo sapiens (Human).